The sequence spans 508 residues: Rhamnogalacturonan I rhamnosyltransferase 1 (508 aa).

A helical; Signal-anchor for type II membrane protein membrane pass occupies residues 41 to 63 (LWMIRAVTVLLLWSCFVHLMALG). N-linked (GlcNAc...) asparagine glycosylation is found at Asn136, Asn202, and Asn223. 277–279 (HLR) contributes to the substrate binding site. A glycan (N-linked (GlcNAc...) asparagine) is linked at Asn391.

Belongs to the glycosyltransferase GT106 family. In terms of tissue distribution, highly expressed in siliques. Expressed in stems and flowers. Expressed at low levels in roots and rosette leaves.

The protein resides in the golgi apparatus membrane. The enzyme catalyses alpha-D-galacturonosyl-[(1-&gt;2)-alpha-L-rhamnosyl-(1-&gt;4)-alpha-D-galacturonosyl](n) + UDP-beta-L-rhamnose = [(1-&gt;2)-alpha-L-rhamnosyl-(1-&gt;4)-alpha-D-galacturonosyl](n+1) + UDP + H(+). Its pathway is glycan metabolism; pectin biosynthesis. In terms of biological role, glycosyltransferase involved in the formation of rhamnogalacturonan I (RG-I) oligosaccharides in the seed coat mucilage, which is a specialized cell wall with abundant RG-I. Transfers the rhamnose residue from UDP-beta-L-rhamnose to RG-I oligosaccharides. Prefers RG-I oligosaccharides with a degree of polymerization of 5 or larger than 5. Does not act on oligosaccharides with a degree of polymerization of 4 or smaller than 4. Does not require metal ions for its activity. The polypeptide is Rhamnogalacturonan I rhamnosyltransferase 1 (Arabidopsis thaliana (Mouse-ear cress)).